The primary structure comprises 328 residues: Glycerol-3-phosphate dehydrogenase [NAD(P)+] (328 aa).

Trp11, Arg30, and Lys103 together coordinate NADPH. Residues Lys103, Gly132, and Ser134 each contribute to the sn-glycerol 3-phosphate site. Ala136 is a binding site for NADPH. Positions 187, 240, 250, 251, and 252 each coordinate sn-glycerol 3-phosphate. The active-site Proton acceptor is the Lys187. Arg251 contacts NADPH. NADPH is bound by residues Val275 and Glu277.

This sequence belongs to the NAD-dependent glycerol-3-phosphate dehydrogenase family.

The protein resides in the cytoplasm. It carries out the reaction sn-glycerol 3-phosphate + NAD(+) = dihydroxyacetone phosphate + NADH + H(+). The enzyme catalyses sn-glycerol 3-phosphate + NADP(+) = dihydroxyacetone phosphate + NADPH + H(+). Its pathway is membrane lipid metabolism; glycerophospholipid metabolism. In terms of biological role, catalyzes the reduction of the glycolytic intermediate dihydroxyacetone phosphate (DHAP) to sn-glycerol 3-phosphate (G3P), the key precursor for phospholipid synthesis. The polypeptide is Glycerol-3-phosphate dehydrogenase [NAD(P)+] (Aromatoleum aromaticum (strain DSM 19018 / LMG 30748 / EbN1) (Azoarcus sp. (strain EbN1))).